Consider the following 200-residue polypeptide: Protein GrpE (200 aa).

Residues 15–47 (DLEMDLNEEELEESEVNEDKEFEELDKSEEENE) are disordered. The segment covering 16–47 (LEMDLNEEELEESEVNEDKEFEELDKSEEENE) has biased composition (acidic residues).

Belongs to the GrpE family. Homodimer.

Its subcellular location is the cytoplasm. Participates actively in the response to hyperosmotic and heat shock by preventing the aggregation of stress-denatured proteins, in association with DnaK and GrpE. It is the nucleotide exchange factor for DnaK and may function as a thermosensor. Unfolded proteins bind initially to DnaJ; upon interaction with the DnaJ-bound protein, DnaK hydrolyzes its bound ATP, resulting in the formation of a stable complex. GrpE releases ADP from DnaK; ATP binding to DnaK triggers the release of the substrate protein, thus completing the reaction cycle. Several rounds of ATP-dependent interactions between DnaJ, DnaK and GrpE are required for fully efficient folding. The protein is Protein GrpE of Clostridium tetani (strain Massachusetts / E88).